Here is a 207-residue protein sequence, read N- to C-terminus: MERKERLRAGIAAMGLDILETAQDRLLAYVDLLKKWNKTYNLTALRDEEKMIVHHLLDSLTLLPYIEGAQTMLDVGSGGGQPGIPAAVCRPDVQITLLDANTKKTAFLQQAVIELGLDNVRVVSGRVEAVSDVRADVITSRAFAELADFVSWTGHLLKDGGYWAAMKGVYPQGEIDRLPQDVCVEKVQRLDVPGLDAERHIAILRKR.

S-adenosyl-L-methionine contacts are provided by residues G76, Q81, 127 to 128 (VE), and R141.

This sequence belongs to the methyltransferase superfamily. RNA methyltransferase RsmG family.

The protein localises to the cytoplasm. It carries out the reaction guanosine(527) in 16S rRNA + S-adenosyl-L-methionine = N(7)-methylguanosine(527) in 16S rRNA + S-adenosyl-L-homocysteine. Its function is as follows. Specifically methylates the N7 position of guanine in position 527 of 16S rRNA. The sequence is that of Ribosomal RNA small subunit methyltransferase G from Neisseria meningitidis serogroup C (strain 053442).